Consider the following 269-residue polypeptide: Eukaryotic translation initiation factor 3 subunit G-1 (269 aa).

The region spanning 188 to 266 (AAIRISNLSE…LILSVEWSKP (79 aa)) is the RRM domain.

This sequence belongs to the eIF-3 subunit G family. As to quaternary structure, component of the eukaryotic translation initiation factor 3 (eIF-3) complex. The eIF-3 complex interacts with pix.

It is found in the cytoplasm. RNA-binding component of the eukaryotic translation initiation factor 3 (eIF-3) complex, which is involved in protein synthesis of a specialized repertoire of mRNAs and, together with other initiation factors, stimulates binding of mRNA and methionyl-tRNAi to the 40S ribosome. The eIF-3 complex specifically targets and initiates translation of a subset of mRNAs involved in cell proliferation. This subunit can bind 18S rRNA. This is Eukaryotic translation initiation factor 3 subunit G-1 from Drosophila sechellia (Fruit fly).